Here is a 53-residue protein sequence, read N- to C-terminus: Sec-independent protein translocase protein TatA (53 aa).

A helical transmembrane segment spans residues 1 to 21 (MGMSFSHLLIVLLIIFVLFGA).

It belongs to the TatA/E family. The Tat system comprises two distinct complexes: a TatABC complex, containing multiple copies of TatA, TatB and TatC subunits, and a separate TatA complex, containing only TatA subunits. Substrates initially bind to the TatABC complex, which probably triggers association of the separate TatA complex to form the active translocon.

The protein localises to the cell inner membrane. Part of the twin-arginine translocation (Tat) system that transports large folded proteins containing a characteristic twin-arginine motif in their signal peptide across membranes. TatA could form the protein-conducting channel of the Tat system. The polypeptide is Sec-independent protein translocase protein TatA (Rickettsia typhi (strain ATCC VR-144 / Wilmington)).